We begin with the raw amino-acid sequence, 259 residues long: L-erythrulose-1-phosphate isomerase (259 aa).

The Electrophile role is filled by histidine 102. Glutamate 174 functions as the Proton acceptor in the catalytic mechanism.

This sequence belongs to the triosephosphate isomerase family.

It carries out the reaction L-erythrulose 1-phosphate = D-erythrulose 4-phosphate. The protein operates within carbohydrate metabolism. In terms of biological role, involved in catabolism of D-apiose. Catalyzes the isomerization of L-erythrulose 1-phosphate to D-erythrulose 4-phosphate. The sequence is that of L-erythrulose-1-phosphate isomerase from Pectobacterium atrosepticum (strain SCRI 1043 / ATCC BAA-672) (Erwinia carotovora subsp. atroseptica).